Here is an 897-residue protein sequence, read N- to C-terminus: MKLNIFTKSMIGMGLVCSALPALAMEAWNNQQGGNKYQVIFDGKIYENAWWVSSTNCPGKAKANDATNPWRLKRTATAAEISQFGNTLSCEKSGSSSSSNSNTPASNTPANGGSATPAQGTVPSNSSVVAWNKQQGGQTWYVVFNGAVYKNAWWVASSNCPGDAKSNDASNPWRYVRAATATEISETSNPQSCTSAPQPSPDVKPAPDVKPAPDVQPAPADKSNDNYAVVAWKGQEGSSTWYVIYNGGIYKNAWWVGAANCPGDAKENDASNPWRYVRAATATEISQYGNPGSCSVKPDNNGGAVTPVDPTPETPVTPTPDNSEPSTPADSVNDYSLQAWSGQEGSEIYHVIFNGNVYKNAWWVGSKDCPRGTSAENSNNPWRLERTATAAELSQYGNPTTCEIDNGGVIVADGFQASKAYSADSIVDYNDAHYKTSVDQDAWGFVPGGDNPWKKYEPAKAWSASTVYVKGDRVVVDGQAYEALFWTQSDNPALVANQNATGSNSRPWKPLGKAQSYSNEELNNAPQFNPETLYASDTLIRFNGVNYISQSKVQKVSPSDSNPWRVFVDWTGTKERVGTPKKAWPKHVYAPYVDFTLNTIPDLAALAKNHNVNHFTLAFVVSKDANTCLPTWGTAYGMQNYAQYSKIKALREAGGDVMLSIGGANNAPLAASCKNVDDLMQHYYDIVDNLNLKVLDFDIEGTWVADQASIERRNLAVKKVQDKWKSEGKDIAIWYTLPILPTGLTPEGMNVLSDAKAKGVELAGVNVMTMDYGNAICQSANTEGQNIHGKCATSAIANLHSQLKGLHPNKSDAEIDAMMGTTPMVGVNDVQGEVFYLSDARLVMQDAQKRNLGMVGIWSIARDLPGGTNLSPEFHGLTKEQAPKYAFSEIFAPFTKQ.

The signal sequence occupies residues 1-24 (MKLNIFTKSMIGMGLVCSALPALA). The region spanning 25-91 (MEAWNNQQGG…SQFGNTLSCE (67 aa)) is the Chitin-binding type-3 1 domain. 3 disordered regions span residues 90–127 (CEKS…SNSS), 182–222 (TEIS…PADK), and 287–333 (QYGN…DSVN). Positions 95-111 (SSSSSNSNTPASNTPAN) are enriched in low complexity. Polar residues-rich tracts occupy residues 113-127 (GSAT…SNSS) and 182-197 (TEIS…TSAP). The Chitin-binding type-3 2 domain maps to 128–194 (VVAWNKQQGG…SETSNPQSCT (67 aa)). The segment covering 198 to 216 (QPSPDVKPAPDVKPAPDVQ) has biased composition (pro residues). The Chitin-binding type-3 3 domain occupies 229-295 (VVAWKGQEGS…SQYGNPGSCS (67 aa)). Residues 309–318 (DPTPETPVTP) are compositionally biased toward pro residues. Residues 322 to 333 (NSEPSTPADSVN) are compositionally biased toward polar residues. Chitin-binding type-3 domains lie at 337-403 (LQAW…TTCE) and 459-529 (AKAW…PQFN). Residues 586 to 877 (KHVYAPYVDF…TNLSPEFHGL (292 aa)) form the GH18 domain. C628 and C673 are joined by a disulfide. The Proton donor role is filled by E700.

It belongs to the glycosyl hydrolase 18 family. Chitinase class II subfamily.

It is found in the periplasm. The enzyme catalyses Random endo-hydrolysis of N-acetyl-beta-D-glucosaminide (1-&gt;4)-beta-linkages in chitin and chitodextrins.. It carries out the reaction Hydrolysis of (1-&gt;4)-beta-linkages between N-acetylmuramic acid and N-acetyl-D-glucosamine residues in a peptidoglycan and between N-acetyl-D-glucosamine residues in chitodextrins.. In terms of biological role, bifunctional enzyme with lysozyme/chitinase activity. The sequence is that of Probable bifunctional chitinase/lysozyme (chiA) from Escherichia coli (strain K12).